The chain runs to 203 residues: MSRYRGPRVRIIRRLGTLPGLTNKSAPQLKPSSINQSTSNKKISQYRIRLEEKQKLRFHYGITERQLLNYVRIARKAKGSTGEILLQLLEMRLDNIIFRLGMTPTIPGARQLVNHRHILVNGYIVDIPSYRCKPQDFITIKNKQKYESIISKNIELYQKSKIANHLTYSSLEKKGLVNQILDRESIGLKINELLVVEYYSRQA.

One can recognise an S4 RNA-binding domain in the interval 91 to 154; the sequence is MRLDNIIFRL…KYESIISKNI (64 aa).

It belongs to the universal ribosomal protein uS4 family. As to quaternary structure, part of the 30S ribosomal subunit. Contacts protein S5. The interaction surface between S4 and S5 is involved in control of translational fidelity.

The protein resides in the plastid. Its subcellular location is the chloroplast. One of the primary rRNA binding proteins, it binds directly to 16S rRNA where it nucleates assembly of the body of the 30S subunit. Functionally, with S5 and S12 plays an important role in translational accuracy. The protein is Small ribosomal subunit protein uS4c (rps4) of Lopidium struthiopteris (Moss).